The following is an 89-amino-acid chain: Large ribosomal subunit protein bL31B (89 aa).

This sequence belongs to the bacterial ribosomal protein bL31 family. Type B subfamily. In terms of assembly, part of the 50S ribosomal subunit.

The sequence is that of Large ribosomal subunit protein bL31B from Aeromonas hydrophila subsp. hydrophila (strain ATCC 7966 / DSM 30187 / BCRC 13018 / CCUG 14551 / JCM 1027 / KCTC 2358 / NCIMB 9240 / NCTC 8049).